The following is a 393-amino-acid chain: G protein-activated inward rectifier potassium channel 3 (393 aa).

Residues 1-23 (MAQENAAFSPGSEEPPRRRGRQR) form a disordered region. Residues 1–57 (MAQENAAFSPGSEEPPRRRGRQRYVEKDGRCNVQQGNVRETYRYLTDLFTTLVDLQW) are Cytoplasmic-facing. The helical transmembrane segment at 58 to 82 (RLSLLFFVLAYALTWLFFGAIWWLI) threads the bilayer. Over 83-106 (AYGRGDLEHLEDTAWTPCVNNLNG) the chain is Extracellular. An intramembrane region (helical; Pore-forming) is located at residues 107 to 118 (FVAAFLFSIETE). The segment at residues 119 to 125 (TTIGYGH) is an intramembrane region (pore-forming). Residues 120–125 (TIGYGH) carry the Selectivity filter motif. Topologically, residues 126 to 134 (RVITDQCPE) are extracellular. Residues 135-156 (GIVLLLLQAILGSMVNAFMVGC) traverse the membrane as a helical segment. At 157 to 393 (MFVKISQPNK…LPPPESESKV (237 aa)) the chain is on the cytoplasmic side. The segment at 360–393 (KVEEEGAGEGAGAGDGADKEHNGCLPPPESESKV) is disordered. The span at 384–393 (LPPPESESKV) shows a compositional bias: pro residues. The short motif at 390 to 393 (ESKV) is the PDZ-binding element.

Belongs to the inward rectifier-type potassium channel (TC 1.A.2.1) family. KCNJ9 subfamily. As to quaternary structure, associates with KCNJ3/GIRK1 to form a G-protein-activated heteromultimer pore-forming unit. Interacts (via PDZ-binding motif) with SNX27 (via PDZ domain); the interaction is required when endocytosed to prevent degradation in lysosomes and promote recycling to the plasma membrane. In terms of tissue distribution, expressed mainly in the brain, some expression in the skeletal muscle.

It localises to the membrane. It carries out the reaction K(+)(in) = K(+)(out). Inward rectifier potassium channels are characterized by a greater tendency to allow potassium to flow into the cell rather than out of it. Their voltage dependence is regulated by the concentration of extracellular potassium; as external potassium is raised, the voltage range of the channel opening shifts to more positive voltages. The inward rectification is mainly due to the blockage of outward current by internal magnesium. This receptor is controlled by G proteins. Unable to produce channel activity when expressed alone. Forms a functional channel in association with KCNJ3/GIRK1. This chain is G protein-activated inward rectifier potassium channel 3 (Kcnj9), found in Mus musculus (Mouse).